Reading from the N-terminus, the 151-residue chain is Small ribosomal subunit protein uS19 (151 aa).

This sequence belongs to the universal ribosomal protein uS19 family.

In terms of biological role, protein S19 forms a complex with S13 that binds strongly to the 16S ribosomal RNA. In Thermoplasma acidophilum (strain ATCC 25905 / DSM 1728 / JCM 9062 / NBRC 15155 / AMRC-C165), this protein is Small ribosomal subunit protein uS19 (rps19).